Reading from the N-terminus, the 252-residue chain is Phosphate import ATP-binding protein PstB (252 aa).

In terms of domain architecture, ABC transporter spans 5–247 (MRGQDVKVFY…PKEQRTQDYI (243 aa)). 37–44 (GPSGCGKS) contributes to the ATP binding site.

This sequence belongs to the ABC transporter superfamily. Phosphate importer (TC 3.A.1.7) family. In terms of assembly, the complex is composed of two ATP-binding proteins (PstB), two transmembrane proteins (PstC and PstA) and a solute-binding protein (PstS).

The protein resides in the cell inner membrane. The enzyme catalyses phosphate(out) + ATP + H2O = ADP + 2 phosphate(in) + H(+). In terms of biological role, part of the ABC transporter complex PstSACB involved in phosphate import. Responsible for energy coupling to the transport system. This is Phosphate import ATP-binding protein PstB from Bartonella henselae (strain ATCC 49882 / DSM 28221 / CCUG 30454 / Houston 1) (Rochalimaea henselae).